A 586-amino-acid polypeptide reads, in one-letter code: Arginine--tRNA ligase (586 aa).

Positions 131–141 (ANPTGPLHVGH) match the 'HIGH' region motif.

Belongs to the class-I aminoacyl-tRNA synthetase family. Monomer.

The protein resides in the cytoplasm. It catalyses the reaction tRNA(Arg) + L-arginine + ATP = L-arginyl-tRNA(Arg) + AMP + diphosphate. The protein is Arginine--tRNA ligase of Nitrosomonas europaea (strain ATCC 19718 / CIP 103999 / KCTC 2705 / NBRC 14298).